Here is a 282-residue protein sequence, read N- to C-terminus: Putative 23S rRNA (guanine-N(1)-)-methyltransferase YxjB (282 aa).

Positions 12, 15, 29, and 34 each coordinate Zn(2+). 103–104 (EG) lines the S-adenosyl-L-methionine pocket.

It belongs to the methyltransferase superfamily. RlmA family.

This Bacillus subtilis (strain 168) protein is Putative 23S rRNA (guanine-N(1)-)-methyltransferase YxjB (yxjB).